The primary structure comprises 143 residues: Large ribosomal subunit protein uL13 (143 aa).

It belongs to the universal ribosomal protein uL13 family. As to quaternary structure, part of the 50S ribosomal subunit.

In terms of biological role, this protein is one of the early assembly proteins of the 50S ribosomal subunit, although it is not seen to bind rRNA by itself. It is important during the early stages of 50S assembly. The protein is Large ribosomal subunit protein uL13 of Clostridioides difficile (strain 630) (Peptoclostridium difficile).